Consider the following 687-residue polypeptide: Macrolide export ATP-binding/permease protein MacB (687 aa).

One can recognise an ABC transporter domain in the interval 6 to 244; the sequence is LKLAAVTRRF…LAEAGVDAAE (239 aa). ATP is bound at residue 42-49; that stretch reads GASGSGKS. A compositionally biased stretch (low complexity) spans 246-256; sequence AEASEAAVGES. A disordered region spans residues 246–281; it reads AEASEAAVGESPTRNRHDTPAPPAAVDTDPHVDTGT. Transmembrane regions (helical) follow at residues 312–332, 560–580, 617–637, and 650–670; these read LLTM…VAIG, LTLL…IGVM, LVCL…GALF, and AGAI…FGFM.

It belongs to the ABC transporter superfamily. Macrolide exporter (TC 3.A.1.122) family. As to quaternary structure, homodimer.

It localises to the cell inner membrane. Its function is as follows. Non-canonical ABC transporter that contains transmembrane domains (TMD), which form a pore in the inner membrane, and an ATP-binding domain (NBD), which is responsible for energy generation. Confers resistance against macrolides. This Burkholderia lata (strain ATCC 17760 / DSM 23089 / LMG 22485 / NCIMB 9086 / R18194 / 383) protein is Macrolide export ATP-binding/permease protein MacB.